The chain runs to 319 residues: Coiled-coil domain-containing protein PF3D7_1144200 (319 aa).

Basic and acidic residues predominate over residues M1–D12. Disordered stretches follow at residues M1–S43 and K112–N158. Positions C16–P26 are enriched in polar residues. Composition is skewed to basic and acidic residues over residues K27–K36 and K112–T131. Coiled coils occupy residues D100–S134, E166–N242, and N281–I310. The segment covering N132–N150 has biased composition (low complexity).

The protein is Coiled-coil domain-containing protein PF3D7_1144200 of Plasmodium falciparum (isolate 3D7).